Reading from the N-terminus, the 504-residue chain is Maturase K (504 aa).

This sequence belongs to the intron maturase 2 family. MatK subfamily.

Its subcellular location is the plastid. The protein resides in the chloroplast. Functionally, usually encoded in the trnK tRNA gene intron. Probably assists in splicing its own and other chloroplast group II introns. This is Maturase K from Pentaplaris doroteae.